Here is a 161-residue protein sequence, read N- to C-terminus: Transcription antitermination protein NusB (161 aa).

It belongs to the NusB family.

Involved in transcription antitermination. Required for transcription of ribosomal RNA (rRNA) genes. Binds specifically to the boxA antiterminator sequence of the ribosomal RNA (rrn) operons. In Syntrophus aciditrophicus (strain SB), this protein is Transcription antitermination protein NusB.